A 159-amino-acid chain; its full sequence is Endoribonuclease YbeY (159 aa).

Positions 125, 129, and 135 each coordinate Zn(2+).

This sequence belongs to the endoribonuclease YbeY family. Zn(2+) serves as cofactor.

The protein resides in the cytoplasm. In terms of biological role, single strand-specific metallo-endoribonuclease involved in late-stage 70S ribosome quality control and in maturation of the 3' terminus of the 16S rRNA. The polypeptide is Endoribonuclease YbeY (Lactiplantibacillus plantarum (strain ATCC BAA-793 / NCIMB 8826 / WCFS1) (Lactobacillus plantarum)).